Here is a 179-residue protein sequence, read N- to C-terminus: Large ribosomal subunit protein uL10 (179 aa).

Belongs to the universal ribosomal protein uL10 family. In terms of assembly, part of the ribosomal stalk of the 50S ribosomal subunit. The N-terminus interacts with L11 and the large rRNA to form the base of the stalk. The C-terminus forms an elongated spine to which L12 dimers bind in a sequential fashion forming a multimeric L10(L12)X complex.

Functionally, forms part of the ribosomal stalk, playing a central role in the interaction of the ribosome with GTP-bound translation factors. This is Large ribosomal subunit protein uL10 from Mycolicibacterium gilvum (strain PYR-GCK) (Mycobacterium gilvum (strain PYR-GCK)).